The chain runs to 437 residues: Epsilon-sarcoglycan (437 aa).

At 1 to 317 (MLLFWWWELG…LKSRDYYTDF (317 aa)) the chain is on the extracellular side. Asn-200 carries an N-linked (GlcNAc...) asparagine glycan. Residues 318–338 (LVTLAVPSAVALVLFLILAYI) traverse the membrane as a helical segment. At 339–437 (MCCRREGVEK…QQQTTGKWYP (99 aa)) the chain is on the cytoplasmic side.

Belongs to the sarcoglycan alpha/epsilon family. N-glycosylated. In terms of processing, ubiquitinated, leading to its degradation by the proteasome. In both neural tissues including cerebellar cortex, striatum, cerebral cortex, thalamus and hippocampus, and non-neural tissues including quadriceps muscle, liver, kidney, spleen, lung, testis and heart. Widely distributed in the brain, with a robust signal obtained from regions with dense neuronal packing such as the pyramidal cell layer of the hippocampus, cerebellar molecular layer, and cerebral cortex. Levels are highest in kidney, moderate in brain and lung, and low in skeletal muscle, liver, spleen and testis.

It is found in the cell membrane. The protein localises to the sarcolemma. Its subcellular location is the cytoplasm. The protein resides in the cytoskeleton. It localises to the cell projection. It is found in the dendrite. The protein localises to the golgi apparatus. Component of the sarcoglycan complex, a subcomplex of the dystrophin-glycoprotein complex which forms a link between the F-actin cytoskeleton and the extracellular matrix. The chain is Epsilon-sarcoglycan from Rattus norvegicus (Rat).